Here is a 349-residue protein sequence, read N- to C-terminus: Zinc-type alcohol dehydrogenase-like protein PB24D3.08c (349 aa).

It belongs to the zinc-containing alcohol dehydrogenase family. Quinone oxidoreductase subfamily.

It is found in the cytoplasm. Its subcellular location is the nucleus. In Schizosaccharomyces pombe (strain 972 / ATCC 24843) (Fission yeast), this protein is Zinc-type alcohol dehydrogenase-like protein PB24D3.08c.